We begin with the raw amino-acid sequence, 124 residues long: MCPQPHADHAITRGDTGAAGGRNWSGPFRKTPGRLVGMTLIRAYQLTLSSFIGNSCRHLPTCSEYGFEAIARYGLWAGGWLTLFRVVRCGPGGTHGFDPVPDSLAPRQRWYTPWRYWQPRRKDA.

Basic and acidic residues predominate over residues 1–12; the sequence is MCPQPHADHAIT. Positions 1 to 26 are disordered; sequence MCPQPHADHAITRGDTGAAGGRNWSG.

Belongs to the UPF0161 family.

The protein resides in the cell inner membrane. Its function is as follows. Could be involved in insertion of integral membrane proteins into the membrane. The sequence is that of Putative membrane protein insertion efficiency factor from Rhizobium meliloti (strain 1021) (Ensifer meliloti).